We begin with the raw amino-acid sequence, 261 residues long: Shikimate dehydrogenase (NADP(+)) (261 aa).

Residues 13 to 15 (SLS) and Thr60 contribute to the shikimate site. Lys64 serves as the catalytic Proton acceptor. Glu76 is an NADP(+) binding site. Asn85 and Asp100 together coordinate shikimate. NADP(+) is bound by residues 122 to 126 (GAGGA), 143 to 148 (NRTVER), and Ile203. Tyr205 is a binding site for shikimate. An NADP(+)-binding site is contributed by Gly226.

It belongs to the shikimate dehydrogenase family. Homodimer.

The enzyme catalyses shikimate + NADP(+) = 3-dehydroshikimate + NADPH + H(+). The protein operates within metabolic intermediate biosynthesis; chorismate biosynthesis; chorismate from D-erythrose 4-phosphate and phosphoenolpyruvate: step 4/7. Involved in the biosynthesis of the chorismate, which leads to the biosynthesis of aromatic amino acids. Catalyzes the reversible NADPH linked reduction of 3-dehydroshikimate (DHSA) to yield shikimate (SA). This is Shikimate dehydrogenase (NADP(+)) from Exiguobacterium sp. (strain ATCC BAA-1283 / AT1b).